We begin with the raw amino-acid sequence, 57 residues long: Small hydrophobic protein (57 aa).

The Virion surface portion of the chain corresponds to 1 to 8; it reads MPAIQPPL. A helical membrane pass occupies residues 9 to 29; it reads YPTFLLLILLSLIITLYVWII. The Intravirion segment spans residues 30–57; that stretch reads STITYKTAVRHAALHQRSFSRWSLDHSL.

It belongs to the rubulavirus small hydrophobic protein family. As to quaternary structure, interacts with host TNFRSF1A, RIPK1 and IRAK1; these interactions interfere with host NF-kappa-B activation at the level of receptor complexes. Interacts with host protein UBQLN4.

The protein resides in the virion membrane. It is found in the host cell membrane. Plays a role in the inhibition of the host NF-kappa-B pathway. This inhibition occurs at the receptor level, by preventing the signaling of TNFR1 as well as IL-1R and TLR3. This Mumps virus genotype B (strain Miyahara vaccine) (MuV) protein is Small hydrophobic protein (SH).